A 474-amino-acid chain; its full sequence is MGVVLSPHPAPSRREPLAPLAPGTRPGWSPAVSGSSRSALRPSTAGPGPGPGTGWGGTAASGRWVPAPAVHCAAPRAAAGHQQHHGPPLCSPDGAPRRFKRRPGSPAPAAQTGETSLREQPHGGPPAVPFVVPPTLQGRDWVPLHSGEWADAPWDPCPASELLPHTSSGGLGDACMVGAINPELYKFPEDKSETDFPDGCLGRLWFSVEYEQEAERLLVGLIKAQHLQAPSETCSPLVKLYLLPDERRFLQSKTKRKTSNPQFDEHFIFQVSSKTITQRVLKFSVYHVDRQRKHQLLGQVLFPLKNETLVGDCRRVIWRDLEAESLEPPSEFGDLQFCLSYNDYLSRLTVVVLRAKGLRLQEDRGIVSVFVKVSLMNHNKFVKCKKTSAVLGSINPVYNETFSFKADATELDTASLSLTVVQNMEGDKSQQLGRVVVGPYMYTRGRELEHWDEMLSKPKELVKRWHALCRTTEP.

Disordered stretches follow at residues 1-62 (MGVV…AASG) and 75-128 (PRAA…PPAV). Low complexity predominate over residues 75 to 88 (PRAAAGHQQHHGPP). 2 C2 domains span residues 200-317 (CLGR…RRVI) and 331-452 (EFGD…EHWD).

Belongs to the synaptotagmin family.

This chain is Synaptotagmin-15B, found in Homo sapiens (Human).